A 139-amino-acid chain; its full sequence is Large ribosomal subunit protein bL21 (139 aa).

This sequence belongs to the bacterial ribosomal protein bL21 family. Part of the 50S ribosomal subunit. Contacts protein L20.

In terms of biological role, this protein binds to 23S rRNA in the presence of protein L20. This chain is Large ribosomal subunit protein bL21, found in Prochlorococcus marinus (strain NATL1A).